The sequence spans 95 residues: Ragulator complex protein LAMTOR4 homolog (95 aa).

The protein belongs to the LAMTOR4 family. As to quaternary structure, part of the Ragulator complex.

It is found in the lysosome. In terms of biological role, regulator of the TOR pathway, a signaling cascade that promotes cell growth in response to growth factors, energy levels, and amino acids. As part of the Ragulator complex, may activate the TOR signaling cascade in response to amino acids. The polypeptide is Ragulator complex protein LAMTOR4 homolog (Nematostella vectensis (Starlet sea anemone)).